The sequence spans 523 residues: DNA-directed primase/polymerase protein (523 aa).

Residues Arg78, 117-119 (DLE), and 168-172 (KFSHH) contribute to the substrate site. 2 residues coordinate Mn(2+): Asp117 and Glu119. The interval 203–230 (LKKSNPEAPGENRDDVEGTQAKRRKTEE) is disordered. Substrate-binding positions include 258–261 (RNFR) and Lys267. Zn(2+)-binding residues include Cys390, His397, Cys417, and Cys422. A Zinc knuckle motif motif is present at residues 390–423 (CHNVKRFHKSNNIIIVVDLKEEVWYQKCHDPECR). Positions 467–477 (APAESTSTTPS) are enriched in low complexity. The tract at residues 467–523 (APAESTSTTPSEDTEGWGDWPDDPAYLRALQEVEEEEEDEDEEVPDELLLQAVNECE) is disordered. Composition is skewed to acidic residues over residues 478–488 (EDTEGWGDWPD) and 498–512 (EVEE…EVPD).

It belongs to the eukaryotic-type primase small subunit family. Mn(2+) is required as a cofactor.

Its subcellular location is the nucleus. The protein localises to the mitochondrion matrix. It is found in the chromosome. It carries out the reaction ssDNA + n NTP = ssDNA/pppN(pN)n-1 hybrid + (n-1) diphosphate.. It catalyses the reaction DNA(n) + a 2'-deoxyribonucleoside 5'-triphosphate = DNA(n+1) + diphosphate. In terms of biological role, DNA primase and DNA polymerase required to tolerate replication-stalling lesions by bypassing them. Required to facilitate mitochondrial and nuclear replication fork progression by initiating de novo DNA synthesis using dNTPs and acting as an error-prone DNA polymerase able to bypass certain DNA lesions. Shows a high capacity to tolerate DNA damage lesions such as 8oxoG and abasic sites in DNA. Provides different translesion synthesis alternatives when DNA replication is stalled: able to synthesize DNA primers downstream of lesions, such as UV lesions, R-loops and G-quadruplexes, to allow DNA replication to continue. Can also realign primers ahead of 'unreadable lesions' such as abasic sites and 6-4 photoproduct (6-4 pyrimidine-pyrimidinone), thereby skipping the lesion. Repriming avoids fork degradation while leading to accumulation of internal ssDNA gaps behind the forks. Also able to incorporate nucleotides opposite DNA lesions such as 8oxoG, like a regular translesion synthesis DNA polymerase. Also required for reinitiating stalled forks after ultraviolet (UV) damage during nuclear DNA replication. Required for mitochondrial DNA (mtDNA) synthesis and replication, by reinitiating synthesis after UV damage or in the presence of chain-terminating nucleotides. In addition to its role in DNA damage response, also required to maintain efficient nuclear and mitochondrial DNA replication in unperturbed cells. This Danio rerio (Zebrafish) protein is DNA-directed primase/polymerase protein.